The chain runs to 221 residues: Phosphoglycolate phosphatase (221 aa).

Asp-7 serves as the catalytic Nucleophile. The Mg(2+) site is built by Asp-7 and Asp-9. Lys-148 is a substrate binding site. Asp-171 and Asp-175 together coordinate Mg(2+).

Belongs to the archaeal SPP-like hydrolase family. The cofactor is Mg(2+).

The catalysed reaction is 2-phosphoglycolate + H2O = glycolate + phosphate. In terms of biological role, catalyzes the dephosphorylation of 2-phosphoglycolate. The protein is Phosphoglycolate phosphatase of Methanothermobacter thermautotrophicus (strain ATCC 29096 / DSM 1053 / JCM 10044 / NBRC 100330 / Delta H) (Methanobacterium thermoautotrophicum).